A 136-amino-acid chain; its full sequence is Ribonuclease VapC47 (136 aa).

One can recognise a PINc domain in the interval 2-104 (IYMDTSALTK…AIHLAAAAQI (103 aa)). Mg(2+)-binding residues include Asp-5 and Asp-94.

This sequence belongs to the PINc/VapC protein family. Requires Mg(2+) as cofactor.

Functionally, toxic component of a type II toxin-antitoxin (TA) system. An RNase. Its toxic effect on colony formation is neutralized by coexpression with cognate antitoxin VapB47. The sequence is that of Ribonuclease VapC47 from Mycobacterium tuberculosis (strain CDC 1551 / Oshkosh).